The primary structure comprises 467 residues: Siroheme synthase (467 aa).

The precorrin-2 dehydrogenase /sirohydrochlorin ferrochelatase stretch occupies residues 1–203; it reads METLPIFMKL…GQEEAARHAM (203 aa). Residues 22–23 and 43–44 each bind NAD(+); these read EI and PE. Ser-128 is subject to Phosphoserine. Residues 216-467 are uroporphyrinogen-III C-methyltransferase; the sequence is GEVYLVGGGP…APSPEVVSAG (252 aa). An S-adenosyl-L-methionine-binding site is contributed by Pro-225. Catalysis depends on Asp-248, which acts as the Proton acceptor. The active-site Proton donor is the Lys-270. Residues 301-303, Ile-306, 331-332, Met-383, and Gly-412 contribute to the S-adenosyl-L-methionine site; these read GGD and TA.

It in the N-terminal section; belongs to the precorrin-2 dehydrogenase / sirohydrochlorin ferrochelatase family. The protein in the C-terminal section; belongs to the precorrin methyltransferase family.

It catalyses the reaction uroporphyrinogen III + 2 S-adenosyl-L-methionine = precorrin-2 + 2 S-adenosyl-L-homocysteine + H(+). The catalysed reaction is precorrin-2 + NAD(+) = sirohydrochlorin + NADH + 2 H(+). The enzyme catalyses siroheme + 2 H(+) = sirohydrochlorin + Fe(2+). It participates in cofactor biosynthesis; adenosylcobalamin biosynthesis; precorrin-2 from uroporphyrinogen III: step 1/1. It functions in the pathway cofactor biosynthesis; adenosylcobalamin biosynthesis; sirohydrochlorin from precorrin-2: step 1/1. The protein operates within porphyrin-containing compound metabolism; siroheme biosynthesis; precorrin-2 from uroporphyrinogen III: step 1/1. Its pathway is porphyrin-containing compound metabolism; siroheme biosynthesis; siroheme from sirohydrochlorin: step 1/1. It participates in porphyrin-containing compound metabolism; siroheme biosynthesis; sirohydrochlorin from precorrin-2: step 1/1. Functionally, multifunctional enzyme that catalyzes the SAM-dependent methylations of uroporphyrinogen III at position C-2 and C-7 to form precorrin-2 via precorrin-1. Then it catalyzes the NAD-dependent ring dehydrogenation of precorrin-2 to yield sirohydrochlorin. Finally, it catalyzes the ferrochelation of sirohydrochlorin to yield siroheme. The polypeptide is Siroheme synthase (Methylobacillus flagellatus (strain ATCC 51484 / DSM 6875 / VKM B-1610 / KT)).